The primary structure comprises 445 residues: Anthranilate N-benzoyltransferase protein 1 (445 aa).

Active-site proton acceptor residues include histidine 164 and aspartate 392.

The protein belongs to the plant acyltransferase family. Post-translationally, N-terminus is blocked.

The enzyme catalyses anthranilate + benzoyl-CoA = N-benzoylanthranilate + CoA. It functions in the pathway phytoalexin biosynthesis; methoxydianthramide B biosynthesis. Catalyzes the formation of N-benzoylanthranilate, in the course of methoxydianthramide B, a phytoalexin. Phytoalexins are produced in response to infection by parasites, and are essential for the expression of disease resistance. The protein is Anthranilate N-benzoyltransferase protein 1 (HCBT1) of Dianthus caryophyllus (Carnation).